We begin with the raw amino-acid sequence, 225 residues long: uncharacterized protein (225 aa).

The Fe2OG dioxygenase domain occupies 114–219; it reads DAEAIIMQVY…RLSVTMRRII (106 aa).

The protein belongs to the iron/ascorbate-dependent oxidoreductase family.

It is found in the cytoplasm. Its subcellular location is the nucleus. This is an uncharacterized protein from Schizosaccharomyces pombe (strain 972 / ATCC 24843) (Fission yeast).